Consider the following 843-residue polypeptide: Structure-specific endonuclease subunit SLX4 (843 aa).

Disordered regions lie at residues 26–111 (SPPS…KTTT), 281–313 (AIPTPTESSTTEDIQGSSSKQQRVKAKKPQKGK), 339–377 (NVAPKSPGRKNISNRPSGMKHSNSGRGKSSTLKNDNGPP), 603–655 (SKTF…AKAL), and 729–748 (ATPNARHSRQRSSSTSFSIE). Polar residues-rich tracts occupy residues 50–69 (ASFSKTPSRKTTSPDSNGEN) and 285–301 (PTESSTTEDIQGSSSKQ). Basic residues predominate over residues 302 to 311 (QRVKAKKPQK). 2 stretches are compositionally biased toward polar residues: residues 349 to 372 (NISNRPSGMKHSNSGRGKSSTLKN) and 603 to 616 (SKTFMPESKPNQGT). Positions 617-636 (DDARKNGFRKENHSDVRVRP) are enriched in basic and acidic residues. Residues 739–748 (RSSSTSFSIE) are compositionally biased toward low complexity.

It belongs to the SLX4 family. Forms a heterodimer with SLX1. Post-translationally, phosphorylated in response to DNA damage.

The protein localises to the nucleus. Regulatory subunit of the SLX1-SLX4 structure-specific endonuclease that resolves DNA secondary structures generated during DNA repair and recombination. Has endonuclease activity towards branched DNA substrates, introducing single-strand cuts in duplex DNA close to junctions with ss-DNA. This chain is Structure-specific endonuclease subunit SLX4, found in Ajellomyces capsulatus (strain G186AR / H82 / ATCC MYA-2454 / RMSCC 2432) (Darling's disease fungus).